Consider the following 118-residue polypeptide: Large ribosomal subunit protein uL18 (118 aa).

The protein belongs to the universal ribosomal protein uL18 family. As to quaternary structure, part of the 50S ribosomal subunit; part of the 5S rRNA/L5/L18/L25 subcomplex. Contacts the 5S and 23S rRNAs.

This is one of the proteins that bind and probably mediate the attachment of the 5S RNA into the large ribosomal subunit, where it forms part of the central protuberance. The polypeptide is Large ribosomal subunit protein uL18 (Brachyspira hyodysenteriae (strain ATCC 49526 / WA1)).